The primary structure comprises 181 residues: Small ribosomal subunit protein uS4 (181 aa).

The 69-residue stretch at 104–172 (RRLQTIVYKK…SRPPVMSQQE (69 aa)) folds into the S4 RNA-binding domain.

It belongs to the universal ribosomal protein uS4 family. Part of the 30S ribosomal subunit. Contacts protein S5. The interaction surface between S4 and S5 is involved in control of translational fidelity.

Functionally, one of the primary rRNA binding proteins, it binds directly to 16S rRNA where it nucleates assembly of the body of the 30S subunit. In terms of biological role, with S5 and S12 plays an important role in translational accuracy. This is Small ribosomal subunit protein uS4 from Saccharolobus solfataricus (strain ATCC 35092 / DSM 1617 / JCM 11322 / P2) (Sulfolobus solfataricus).